A 262-amino-acid chain; its full sequence is Phosphonates import ATP-binding protein PhnC (262 aa).

The region spanning 5–253 (IRVEKLAKTF…RFDHLYRSIN (249 aa)) is the ABC transporter domain. An ATP-binding site is contributed by 37–44 (GPSGSGKS).

Belongs to the ABC transporter superfamily. Phosphonates importer (TC 3.A.1.9.1) family. The complex is composed of two ATP-binding proteins (PhnC), two transmembrane proteins (PhnE) and a solute-binding protein (PhnD).

The protein localises to the cell inner membrane. The enzyme catalyses phosphonate(out) + ATP + H2O = phosphonate(in) + ADP + phosphate + H(+). Its function is as follows. Part of the ABC transporter complex PhnCDE involved in phosphonates import. Responsible for energy coupling to the transport system. This chain is Phosphonates import ATP-binding protein PhnC, found in Shigella boydii serotype 4 (strain Sb227).